Here is a 200-residue protein sequence, read N- to C-terminus: MMKSDSVAIDVPESSSVAKRKAPFMANIRDENGGYKKGLAIFDFILRLGAIAAALGAASTMGTSDETLPFFTQFFQFNAGYDDFPTFQFFVIAMAMVAGYLVLSLPFSIVSICRPHAAGPRILLFILDTVALTLNAAAGAAAADIVYLAHNGNQTTNWLAICLQFGDFCREVSGSVVASFASVVILMVLVVMSGLALRRY.

At Met1–Lys37 the chain is on the cytoplasmic side. Residues Gly38–Ala58 form a helical membrane-spanning segment. Over Ser59 to Gln88 the chain is Extracellular. Residues Phe89–Ile109 form a helical membrane-spanning segment. Residues Val110–Arg121 are Cytoplasmic-facing. The helical transmembrane segment at Ile122–Ala142 threads the bilayer. Topologically, residues Ala143–Ser175 are extracellular. Asn153 is a glycosylation site (N-linked (GlcNAc...) asparagine). Residues Val176–Ala196 traverse the membrane as a helical segment. The Cytoplasmic portion of the chain corresponds to Leu197 to Tyr200.

This sequence belongs to the Casparian strip membrane proteins (CASP) family. As to quaternary structure, homodimer and heterodimers.

It localises to the cell membrane. In terms of biological role, regulates membrane-cell wall junctions and localized cell wall deposition. Required for establishment of the Casparian strip membrane domain (CSD) and the subsequent formation of Casparian strips, a cell wall modification of the root endodermis that determines an apoplastic barrier between the intraorganismal apoplasm and the extraorganismal apoplasm and prevents lateral diffusion. The protein is Casparian strip membrane protein 2 of Ricinus communis (Castor bean).